The following is a 219-amino-acid chain: Proteasome subunit beta type-9 (219 aa).

Positions M1 to G20 are cleaved as a propeptide — removed in mature form. T21 serves as the catalytic Nucleophile. Residues K53 and K109 each carry the N6-acetyllysine modification.

This sequence belongs to the peptidase T1B family. In terms of assembly, the 26S proteasome consists of a 20S proteasome core and two 19S regulatory subunits. The 20S proteasome core is composed of 28 subunits that are arranged in four stacked rings, resulting in a barrel-shaped structure. The two end rings are each formed by seven alpha subunits, and the two central rings are each formed by seven beta subunits. The catalytic chamber with the active sites is on the inside of the barrel. Component of the immunoproteasome, where it displaces the equivalent housekeeping subunit PSMB6. Component of the spermatoproteasome, a form of the proteasome specifically found in testis. Interacts with NCOA2 and NCOA3. In terms of processing, autocleaved. The resulting N-terminal Thr residue of the mature subunit is responsible for the nucleophile proteolytic activity. In terms of tissue distribution, detected in the cytoplasmic lobe of elongated spermatids, in residual bodies, and in the acrosomal cap of round spermatids.

It is found in the cytoplasm. It localises to the nucleus. It catalyses the reaction Cleavage of peptide bonds with very broad specificity.. The proteasome is a multicatalytic proteinase complex which is characterized by its ability to cleave peptides with Arg, Phe, Tyr, Leu, and Glu adjacent to the leaving group at neutral or slightly basic pH. The proteasome has an ATP-dependent proteolytic activity. This subunit is involved in antigen processing to generate class I binding peptides. This is Proteasome subunit beta type-9 (Psmb9) from Rattus norvegicus (Rat).